We begin with the raw amino-acid sequence, 315 residues long: Calumenin (315 aa).

A signal peptide spans 1-19 (MDLRQFLMCLSLCTAFALS). Phosphotyrosine is present on Y47. Position 65 is a phosphothreonine (T65). 6 EF-hand domains span residues 68 to 103 (ESKE…AQKK), 104 to 139 (YIYD…TYLD), 151 to 186 (PIMV…EEYD), 188 to 223 (MKDI…HDGN), 229 to 264 (WVKT…SDYD), and 265 to 300 (HAEA…FVGS). S69 carries the phosphoserine modification. Ca(2+) is bound by residues D81, D83, D85, E92, D117, N119, D121, and E128. A glycan (N-linked (GlcNAc...) asparagine) is linked at N131. Ca(2+) contacts are provided by D164, D166, D168, E175, D201, N203, D205, E212, D242, N244, D246, K248, and E253. T254 is subject to Phosphothreonine. Residues S261 and S277 each carry the phosphoserine modification. D278, D280, D282, K284, and E289 together coordinate Ca(2+). Residues 312–315 (HDEF) carry the Prevents secretion from ER motif.

This sequence belongs to the CREC family. As to quaternary structure, binds crotoxin. Interacts with GGCX.

It localises to the endoplasmic reticulum membrane. It is found in the golgi apparatus. The protein localises to the secreted. Its subcellular location is the melanosome. The protein resides in the sarcoplasmic reticulum lumen. In terms of biological role, involved in regulation of vitamin K-dependent carboxylation of multiple N-terminal glutamate residues. Seems to inhibit gamma-carboxylase GGCX. Binds 7 calcium ions with a low affinity. This is Calumenin (Calu) from Rattus norvegicus (Rat).